Reading from the N-terminus, the 339-residue chain is DNA-directed RNA polymerase subunit alpha (339 aa).

Positions 1-233 (MVREEVAGST…DLFLPFLHAE (233 aa)) are alpha N-terminal domain (alpha-NTD). Positions 264 to 339 (KKGIPLNCIF…IDLLKNKLSF (76 aa)) are alpha C-terminal domain (alpha-CTD).

The protein belongs to the RNA polymerase alpha chain family. In terms of assembly, in plastids the minimal PEP RNA polymerase catalytic core is composed of four subunits: alpha, beta, beta', and beta''. When a (nuclear-encoded) sigma factor is associated with the core the holoenzyme is formed, which can initiate transcription.

It is found in the plastid. Its subcellular location is the chloroplast. It catalyses the reaction RNA(n) + a ribonucleoside 5'-triphosphate = RNA(n+1) + diphosphate. In terms of biological role, DNA-dependent RNA polymerase catalyzes the transcription of DNA into RNA using the four ribonucleoside triphosphates as substrates. This is DNA-directed RNA polymerase subunit alpha from Aegilops uniaristata (Goatgrass).